The sequence spans 204 residues: Outer-membrane lipoprotein carrier protein (204 aa).

The signal sequence occupies residues 1–21 (MKKLLVACCVVSGMMSASVLA).

It belongs to the LolA family. In terms of assembly, monomer.

It is found in the periplasm. Functionally, participates in the translocation of lipoproteins from the inner membrane to the outer membrane. Only forms a complex with a lipoprotein if the residue after the N-terminal Cys is not an aspartate (The Asp acts as a targeting signal to indicate that the lipoprotein should stay in the inner membrane). The protein is Outer-membrane lipoprotein carrier protein of Edwardsiella ictaluri (strain 93-146).